Reading from the N-terminus, the 317-residue chain is Methionyl-tRNA formyltransferase (317 aa).

112–115 lines the (6S)-5,6,7,8-tetrahydrofolate pocket; sequence SLLP.

This sequence belongs to the Fmt family.

It carries out the reaction L-methionyl-tRNA(fMet) + (6R)-10-formyltetrahydrofolate = N-formyl-L-methionyl-tRNA(fMet) + (6S)-5,6,7,8-tetrahydrofolate + H(+). In terms of biological role, attaches a formyl group to the free amino group of methionyl-tRNA(fMet). The formyl group appears to play a dual role in the initiator identity of N-formylmethionyl-tRNA by promoting its recognition by IF2 and preventing the misappropriation of this tRNA by the elongation apparatus. This chain is Methionyl-tRNA formyltransferase, found in Mycoplasma mycoides subsp. mycoides SC (strain CCUG 32753 / NCTC 10114 / PG1).